A 234-amino-acid chain; its full sequence is Ubiquitin carboxyl-terminal hydrolase 3 (234 aa).

Residues 12-232 (RWLPLESNPD…LNFNLIAISK (221 aa)) form the UCH catalytic domain. Catalysis depends on C101, which acts as the Nucleophile. The active-site Proton donor is H172.

It belongs to the peptidase C12 family.

The enzyme catalyses Thiol-dependent hydrolysis of ester, thioester, amide, peptide and isopeptide bonds formed by the C-terminal Gly of ubiquitin (a 76-residue protein attached to proteins as an intracellular targeting signal).. This Arabidopsis thaliana (Mouse-ear cress) protein is Ubiquitin carboxyl-terminal hydrolase 3.